The following is a 335-amino-acid chain: MVREKITVSTRTLQWKCVESAADSKRLLYGRFILSPLMKGQADTIGIAMRRALLGEIEGTCITRAKSEKISHEYSTIMGIQESVHEILMNLKEIVLRSNLYGTCEASICVRGPGYVTAQDIILPPYVEILDNTQHIASLTEPIELVIGLQIEKNRGYLIKAPNTFQDGSYPIDPVFMPVRNANHSIHSYENGNKEILFLEIWTNGSLTPKEALYEASRNLIDLLIPFLHTKEENLNLEGNQHMVPLPPFTFYDKLAKLTKNKKKMALKSIFIDQSELPPRIYNCLKRSNIYTLLDLLNNSQEDLMKMEHFRIEDVKQILGILEKNFVIDLPKNKF.

Positions 1 to 231 (MVREKITVST…DLLIPFLHTK (231 aa)) are alpha N-terminal domain (alpha-NTD). The segment at 263-335 (KKMALKSIFI…FVIDLPKNKF (73 aa)) is alpha C-terminal domain (alpha-CTD).

It belongs to the RNA polymerase alpha chain family. In terms of assembly, in plastids the minimal PEP RNA polymerase catalytic core is composed of four subunits: alpha, beta, beta', and beta''. When a (nuclear-encoded) sigma factor is associated with the core the holoenzyme is formed, which can initiate transcription.

The protein localises to the plastid. Its subcellular location is the chloroplast. It carries out the reaction RNA(n) + a ribonucleoside 5'-triphosphate = RNA(n+1) + diphosphate. Its function is as follows. DNA-dependent RNA polymerase catalyzes the transcription of DNA into RNA using the four ribonucleoside triphosphates as substrates. This Lactuca sativa (Garden lettuce) protein is DNA-directed RNA polymerase subunit alpha.